The sequence spans 1055 residues: Cellulose synthase A catalytic subunit 9 [UDP-forming] (1055 aa).

The Cytoplasmic segment spans residues 1-268 (MEASAGLVAG…ASSKVNPYRM (268 aa)). 8 residues coordinate Zn(2+): cysteine 37, cysteine 40, cysteine 56, cysteine 59, cysteine 64, cysteine 67, cysteine 79, and cysteine 82. The segment at 37-83 (CEICGDEVGRTVDGDLFVACNECGFPVCRPCYEYERREGTQNCPQCK) adopts an RING-type; degenerate zinc-finger fold. Residues 269 to 289 (VIILRLVVLGFFLRYRILHPV) traverse the membrane as a helical segment. Residues 290 to 291 (PD) are Extracellular-facing. Residues 292 to 312 (AIPLWLTSIICEIWFAVSWIL) traverse the membrane as a helical segment. Topologically, residues 313 to 831 (DQFPKWYPID…LERFSYINTT (519 aa)) are cytoplasmic. Positions 351, 357, 358, and 387 each coordinate UDP-alpha-D-glucose. Residue aspartate 387 is part of the active site. Residues 439-468 (NFVQERRAMKREYEEFKVRINALVAKAQKV) adopt a coiled-coil conformation. UDP-alpha-D-glucose is bound at residue lysine 528. Mn(2+) is bound by residues lysine 529 and aspartate 553. Residue aspartate 753 is part of the active site. Residues 832-852 (IYPFTSLPLLAYCTLPAVCLL) form a helical membrane-spanning segment. Topologically, residues 853–860 (TGKFIMPP) are extracellular. Residues 861–881 (ISTFASLFFIALFISIFATGI) form a helical membrane-spanning segment. Over 882-899 (LEMRWSGVSIEEWWRNEQ) the chain is Cytoplasmic. Residues 900–920 (FWVIGGVSAHLFAVVQGLLKV) form a helical membrane-spanning segment. The Extracellular segment spans residues 921–951 (LAGIDTNFTVTSKATGDEDDEFAELYAFKWT). Residue asparagine 927 is glycosylated (N-linked (GlcNAc...) asparagine). Residues 952-972 (TLLIPPTTLLILNIIGVVAGV) traverse the membrane as a helical segment. The Cytoplasmic portion of the chain corresponds to 973-983 (SDAINNGSEAW). A helical membrane pass occupies residues 984–1004 (GPLFGKLFFAFWVIVHLYPFL). Residues 1005–1013 (KGLMGRQNR) lie on the Extracellular side of the membrane. A helical transmembrane segment spans residues 1014–1034 (TPTIVVIWSVLLASIFSLLWV). At 1035–1055 (RIDPFTIKARGPDVRQCGINC) the chain is on the cytoplasmic side.

Belongs to the glycosyltransferase 2 family. Plant cellulose synthase subfamily. The cofactor is Mn(2+). Zn(2+) serves as cofactor.

It is found in the cell membrane. The enzyme catalyses [(1-&gt;4)-beta-D-glucosyl](n) + UDP-alpha-D-glucose = [(1-&gt;4)-beta-D-glucosyl](n+1) + UDP + H(+). The protein operates within glycan metabolism; plant cellulose biosynthesis. Its function is as follows. Catalytic subunit of cellulose synthase terminal complexes ('rosettes'), required for beta-1,4-glucan microfibril crystallization, a major mechanism of the cell wall formation. Involved in the secondary cell wall formation. This is Cellulose synthase A catalytic subunit 9 [UDP-forming] (CESA9) from Oryza sativa subsp. indica (Rice).